Reading from the N-terminus, the 507-residue chain is FLYWCH transcription factor 1 (507 aa).

Over residues 1–26 (MYSPESMNSNISSPSPPSSSSLNAPS) the composition is skewed to low complexity. The segment at 1-51 (MYSPESMNSNISSPSPPSSSSLNAPSLADAPEVRSDDGEAETSEPSTSVTA) is disordered. An FLYWCH-type zinc finger spans residues 135-192 (KKTRLKVFSNGFFMTFDKLSSCQKKYFWRCEYKNTCKARMHTDIVTEKILTFIHEHNH).

Functionally, probable transcription factor. Binds to the DNA sequence motif 5'-[AG]GGCGCCG-3' in the promoters of target genes, including micro-RNA genes, in order to repress expression, and acting redundantly with flh-2. The protein is FLYWCH transcription factor 1 of Caenorhabditis elegans.